A 418-amino-acid polypeptide reads, in one-letter code: Metacaspase-4 (418 aa).

Residues His86 and Cys139 contribute to the active site. Cys139 is modified (S-nitrosocysteine). The tract at residues 153–172 is disordered; that stretch reads GESTKKEAEDEDESEESSSR.

It belongs to the peptidase C14B family. Post-translationally, the two subunits are derived from the precursor sequence by an autocatalytic mechanism. As to expression, expressed in roots, cotyledons, leaves, cauline leaves, pollen and embryos.

The protein resides in the cytoplasm. It is found in the cytosol. With respect to regulation, activated by Ca(2+) which induces self-processing and accelerates the rate of the enzyme activity, but has no effect on Km. Functionally, cysteine protease that cleaves specifically after arginine or lysine residues. Does not cleave caspase-specific substrates. Plays a positive regulatory role in biotic and abiotic stress-induced programmed cell death. This is Metacaspase-4 (AMC4) from Arabidopsis thaliana (Mouse-ear cress).